A 39-amino-acid chain; its full sequence is Photosystem II reaction center protein J (39 aa).

The helical transmembrane segment at 7–27 (IPLWVVAVIAGLGVIAVVGLF) threads the bilayer.

It belongs to the PsbJ family. As to quaternary structure, PSII is composed of 1 copy each of membrane proteins PsbA, PsbB, PsbC, PsbD, PsbE, PsbF, PsbH, PsbI, PsbJ, PsbK, PsbL, PsbM, PsbT, PsbX, PsbY, PsbZ, Psb30/Ycf12, peripheral proteins PsbO, CyanoQ (PsbQ), PsbU, PsbV and a large number of cofactors. It forms dimeric complexes.

The protein localises to the cellular thylakoid membrane. Its function is as follows. One of the components of the core complex of photosystem II (PSII). PSII is a light-driven water:plastoquinone oxidoreductase that uses light energy to abstract electrons from H(2)O, generating O(2) and a proton gradient subsequently used for ATP formation. It consists of a core antenna complex that captures photons, and an electron transfer chain that converts photonic excitation into a charge separation. The sequence is that of Photosystem II reaction center protein J from Gloeothece citriformis (strain PCC 7424) (Cyanothece sp. (strain PCC 7424)).